A 140-amino-acid chain; its full sequence is Organic hydroperoxide resistance protein-like (140 aa).

The protein belongs to the OsmC/Ohr family.

The polypeptide is Organic hydroperoxide resistance protein-like (Mycoplasma genitalium (strain ATCC 33530 / DSM 19775 / NCTC 10195 / G37) (Mycoplasmoides genitalium)).